The sequence spans 158 residues: UPF0225 protein Pput_1155 (158 aa).

Belongs to the UPF0225 family.

In Pseudomonas putida (strain ATCC 700007 / DSM 6899 / JCM 31910 / BCRC 17059 / LMG 24140 / F1), this protein is UPF0225 protein Pput_1155.